The primary structure comprises 106 residues: UPF0091 protein RP266 (106 aa).

The protein belongs to the UPF0091 family.

The sequence is that of UPF0091 protein RP266 from Rickettsia prowazekii (strain Madrid E).